The sequence spans 151 residues: MHIWVDADACPVVIKEILFKAAQRAKVQMTLVANHTMRIPKSSYIDFLQVTQGFDIADNEIVKRLSDNDLVITADIPLAAEAIENGAIALNPRGELYTTENIRARLNMRDFMDSLRSSGVDTGGPPPLNQKDRQAFANNLDRLLTRYARQR.

Residues 116–135 (RSSGVDTGGPPPLNQKDRQA) are disordered.

This sequence belongs to the UPF0178 family.

This is UPF0178 protein Tcr_1995 from Hydrogenovibrio crunogenus (strain DSM 25203 / XCL-2) (Thiomicrospira crunogena).